Consider the following 557-residue polypeptide: Phosphoacetylglucosamine mutase (557 aa).

The active-site Phosphoserine intermediate is the Ser-67. Mg(2+) is bound by residues Ser-67, Asp-298, Asp-300, and Asp-302. A Phosphoserine modification is found at Ser-67. Substrate-binding positions include 395-397 (EAN), 522-526 (RASGT), and Arg-531.

It belongs to the phosphohexose mutase family. Requires Mg(2+) as cofactor.

It localises to the cytoplasm. Its subcellular location is the nucleus. The catalysed reaction is N-acetyl-alpha-D-glucosamine 1-phosphate = N-acetyl-D-glucosamine 6-phosphate. Its pathway is nucleotide-sugar biosynthesis; UDP-N-acetyl-alpha-D-glucosamine biosynthesis; N-acetyl-alpha-D-glucosamine 1-phosphate from alpha-D-glucosamine 6-phosphate (route I): step 2/2. Functionally, catalyzes the conversion of GlcNAc-6-P into GlcNAc-1-P during the synthesis of uridine diphosphate/UDP-GlcNAc, which is a biosynthetic precursor of chitin and also supplies the amino sugars for N-linked oligosaccharides of glycoproteins. Also has phosphoglucomutase activity. The protein is Phosphoacetylglucosamine mutase of Saccharomyces cerevisiae (strain ATCC 204508 / S288c) (Baker's yeast).